The primary structure comprises 348 residues: Holliday junction branch migration complex subunit RuvB (348 aa).

Residues 1-183 (MTDPSRLVTP…FGIPVRLNFY (183 aa)) are large ATPase domain (RuvB-L). ATP is bound by residues L22, R23, G64, K67, T68, T69, 130–132 (EDF), R173, Y183, and R220. T68 serves as a coordination point for Mg(2+). A small ATPAse domain (RuvB-S) region spans residues 184–254 (TIEELESIVS…IADHALGALE (71 aa)). The segment at 257–348 (AAGLDAMDRR…FGLFGGEEEA (92 aa)) is head domain (RuvB-H). Residues R293, R312, and R317 each coordinate DNA.

It belongs to the RuvB family. In terms of assembly, homohexamer. Forms an RuvA(8)-RuvB(12)-Holliday junction (HJ) complex. HJ DNA is sandwiched between 2 RuvA tetramers; dsDNA enters through RuvA and exits via RuvB. An RuvB hexamer assembles on each DNA strand where it exits the tetramer. Each RuvB hexamer is contacted by two RuvA subunits (via domain III) on 2 adjacent RuvB subunits; this complex drives branch migration. In the full resolvosome a probable DNA-RuvA(4)-RuvB(12)-RuvC(2) complex forms which resolves the HJ.

The protein localises to the cytoplasm. It carries out the reaction ATP + H2O = ADP + phosphate + H(+). Its function is as follows. The RuvA-RuvB-RuvC complex processes Holliday junction (HJ) DNA during genetic recombination and DNA repair, while the RuvA-RuvB complex plays an important role in the rescue of blocked DNA replication forks via replication fork reversal (RFR). RuvA specifically binds to HJ cruciform DNA, conferring on it an open structure. The RuvB hexamer acts as an ATP-dependent pump, pulling dsDNA into and through the RuvAB complex. RuvB forms 2 homohexamers on either side of HJ DNA bound by 1 or 2 RuvA tetramers; 4 subunits per hexamer contact DNA at a time. Coordinated motions by a converter formed by DNA-disengaged RuvB subunits stimulates ATP hydrolysis and nucleotide exchange. Immobilization of the converter enables RuvB to convert the ATP-contained energy into a lever motion, pulling 2 nucleotides of DNA out of the RuvA tetramer per ATP hydrolyzed, thus driving DNA branch migration. The RuvB motors rotate together with the DNA substrate, which together with the progressing nucleotide cycle form the mechanistic basis for DNA recombination by continuous HJ branch migration. Branch migration allows RuvC to scan DNA until it finds its consensus sequence, where it cleaves and resolves cruciform DNA. In Rhodopseudomonas palustris (strain HaA2), this protein is Holliday junction branch migration complex subunit RuvB.